Reading from the N-terminus, the 411-residue chain is MREHFNDGIEFARFLAHRFVTDKAPNSAAALTYTTLFAVVPMMTVMFSMLSLIPAFHGMGESIQTFIFRNFVPSAGEAVETYLKSFTTQARHLTWVGVVFLAVTAFTMLVTIEKAFNEIWRVRQPRRGVGRFLLYWAILSLGPLLLGAGFAVTTYITSLSLLHGPDALPGAETLLGLMPLAFSVAAFTLLYSAVPNARVPVRHALMGGMFTAVLFEAAKTLFGLYVSLFPGYQLIYGAFATVPIFLLWIYLSWMIVLFGAVLVCNLSSSRLWRRRSLPKPIVLLGVLRVFHQRQQLGQSMRLVHLHRAGWLLPEDEWEELLDFLEKEQFVCRVGGGEWVLCRDLGSYSLHRLLNRCPWPMPSRERMPAQLDEAWYPAFQQAMERLQAEQERLFGESLAHWLAEGNASAKVT.

The next 6 membrane-spanning stretches (helical) occupy residues 36–56, 92–112, 132–152, 174–194, 207–229, and 244–264; these read LFAV…IPAF, HLTW…LVTI, FLLY…GFAV, LLGL…YSAV, GGMF…VSLF, and IFLL…VLVC.

It belongs to the UPF0761 family.

Its subcellular location is the cell inner membrane. In Pseudomonas paraeruginosa (strain DSM 24068 / PA7) (Pseudomonas aeruginosa (strain PA7)), this protein is UPF0761 membrane protein PSPA7_4558.